The primary structure comprises 349 residues: tRNA N6-adenosine threonylcarbamoyltransferase (349 aa).

Fe cation is bound by residues H115 and H119. Substrate contacts are provided by residues 137 to 141 (LASGG), D170, G183, and N281. Fe cation is bound at residue D309.

The protein belongs to the KAE1 / TsaD family. It depends on Fe(2+) as a cofactor.

The protein localises to the cytoplasm. The catalysed reaction is L-threonylcarbamoyladenylate + adenosine(37) in tRNA = N(6)-L-threonylcarbamoyladenosine(37) in tRNA + AMP + H(+). Required for the formation of a threonylcarbamoyl group on adenosine at position 37 (t(6)A37) in tRNAs that read codons beginning with adenine. Is involved in the transfer of the threonylcarbamoyl moiety of threonylcarbamoyl-AMP (TC-AMP) to the N6 group of A37, together with TsaE and TsaB. TsaD likely plays a direct catalytic role in this reaction. This Methylobacterium nodulans (strain LMG 21967 / CNCM I-2342 / ORS 2060) protein is tRNA N6-adenosine threonylcarbamoyltransferase.